Consider the following 172-residue polypeptide: PRELI domain containing protein 3A (172 aa).

Residues 1–172 (MKIWSSEHVF…IIEHSESAVS (172 aa)) form the PRELI/MSF1 domain.

The protein belongs to the slowmo family. Interacts with TRIAP1.

Its subcellular location is the mitochondrion. In vitro, the TRIAP1:PRELID3A complex mediates the transfer of phosphatidic acid (PA) between liposomes and probably functions as a PA transporter across the mitochondrion intermembrane space. Phosphatidic acid import is required for cardiolipin (CL) synthesis in the mitochondrial inner membrane. This is PRELI domain containing protein 3A (PRELID3A) from Homo sapiens (Human).